A 312-amino-acid polypeptide reads, in one-letter code: Zinc finger protein 414 (312 aa).

The interval 1-110 (MEEKPSGPIP…RRPPPGKQIP (110 aa)) is disordered. Over residues 29 to 48 (SPAVPAAAPSSSMSEEPGPE) the composition is skewed to low complexity. Polar residues predominate over residues 84-93 (GLTSIVSGTS). 3 C2H2-type zinc fingers span residues 109–133 (IPCS…LRTH), 145–169 (FRCS…SKLH), and 176–201 (FKCE…CAEH). Residues 203 to 312 (QSPAPPPPPA…GSDAPSGACR (110 aa)) are disordered. Positions 213–225 (LDREPPAPERPPE) are enriched in basic and acidic residues. Composition is skewed to low complexity over residues 227-243 (DPAS…EPFT) and 265-285 (SPPR…SSAA).

It belongs to the krueppel C2H2-type zinc-finger protein family.

The protein localises to the nucleus. Its function is as follows. May be involved in transcriptional regulation. This is Zinc finger protein 414 (ZNF414) from Homo sapiens (Human).